A 1027-amino-acid polypeptide reads, in one-letter code: MIRQCRAGLRLCRALYQTSYRWHGKSACERALRYAPGESIHGFTVNEVTPVPELFLTAVKLSHDNTGAKYLHVAREDSNNLFSVQFRTTPLDSTGVPHILEHTVLCGSQKYPCRDPFFKMLNRSLSTFMNAFTASDYTMYPFSTQNAKDFQNLLSVYLDAVFFPCLRELDFWQEGWRLEHENPEDPNSPLIFKGIVFNEMKGAFTDNEKVFSQHLQNKLLPDHTYSVVSGGEPLNIPDLTWEQLKQFHATHYHPSNARFFTYGNLPLEIHLKQIHEDALSKFERIDPKTSVPPQERWQSPREYSISCGTDSFASDPEKQTTVSVNFLLSEITDTFEAFTLSLLSSLMVDGPNSPFYKALIEANLGTDFSPDTGFNNYTRETYFSIGLQGINKEDSEKVKAIINKTINEVAEHGIEAERIEALLHKLEIQMKHQSTSFGLTLASYVASCWNHEGDPVDLLKIGDKISRFRECLKENPKFLQDKVKQYFQVSQHRMTLSMSPDEQHYDKEAQLEAEKLTQKVKALSEEERKQIYEKGLELIRLQSKPQDASCLPALKVSDIEPKIPLTDLDITYAGDVPVQYCAQPTNGMVYFRAVSSLNTLPEELKPYVPLFCSVITKLGCGVYNYREQAQQMELTTGGMSVCPHIITDDSNLDTYEQGVVFSSLCLDRNLPDMMHLWSEIFNSPHFDDEERLRVLVRMSAQEMSNGIPDSGHVYASIRAGRTLTPAGELQELFSGMDQVKMIKRIAEMPEMGPILRKLSRIRKYVLLSDNMRCSVNATPQQMPVASKEIEHFLAGISRSKKERKSIRPHVVEKSSSPSSSGSEISRRATRKLVGDPTFKPCQMKTHFSLSFPVNYIGECVRTVPYTHPDYASLRILARIMTAKFLHGEIREKGGAYGGGAKLSFDGIFGFYSYRDPNSLSTLSTFQKAADWAKSGQFTQQDVDEAKLSVFSAVDSPIAPSDKGMNHFLHGISDEMKQKHREQLFAVTHSDLTNASNKYLTAGQCTRGTAILGPENRNIAKDPSWIIR.

A mitochondrion-targeting transit peptide spans 1-22 (MIRQCRAGLRLCRALYQTSYRW). His-98 lines the Zn(2+) pocket. Glu-101 (proton acceptor) is an active-site residue. Residues His-102 and Glu-199 each coordinate Zn(2+). Cysteines 113 and 550 form a disulfide. Residues 800–829 (KKERKSIRPHVVEKSSSPSSSGSEISRRAT) are disordered. Residues 814–823 (SSSPSSSGSE) show a composition bias toward low complexity.

Belongs to the peptidase M16 family. PreP subfamily. In terms of assembly, monomer and homodimer; homodimerization is induced by binding of the substrate. Zn(2+) serves as cofactor. Post-translationally, a disulfide bond locks the enzyme in the closed conformation preventing substrate entry into the catalytic chamber.

It is found in the mitochondrion matrix. Its activity is regulated as follows. Mainly exists in a closed and catalytically competent conformation but a closed-to-open switch allows substrate entry into the catalytic chamber. Substrate binding induces closure and dimerization. A disulfide bond may lock the enzyme in a closed conformation preventing substrate entry into the catalytic chamber, participating in redox regulation of the enzyme. Inhibited by metal-chelating agents. Inhibited by nickel and zinc excess, and slightly activated by manganese. Functionally, metalloendopeptidase of the mitochondrial matrix that functions in peptide cleavage and degradation rather than in protein processing. Has an ATP-independent activity. Specifically cleaves peptides in the range of 5 to 65 residues. Shows a preference for cleavage after small polar residues and before basic residues, but without any positional preference. Degrades the transit peptides of mitochondrial proteins after their cleavage. Also degrades other unstructured peptides. This Xenopus tropicalis (Western clawed frog) protein is Presequence protease, mitochondrial (pitrm1).